The sequence spans 31 residues: Kappa-theraphotoxin-Ps1b (31 aa).

3 disulfide bridges follow: Cys-2–Cys-16, Cys-9–Cys-21, and Cys-15–Cys-25. Met-31 carries the post-translational modification Methionine amide.

It belongs to the neurotoxin 30 (phrixotoxin) family. Expressed by the venom gland.

The protein localises to the secreted. Potent and specific blocker of Kv4.2/KCND2 (IC(50)=34 nM) and Kv4.3/KCND3 (IC(50)=71 nM) potassium channels. Acts by altering the gating properties of these channels. The chain is Kappa-theraphotoxin-Ps1b from Paraphysa scrofa (Chilean copper tarantula).